We begin with the raw amino-acid sequence, 275 residues long: Rhamnulose-1-phosphate aldolase (275 aa).

Glutamate 117 is a catalytic residue. Histidine 141, histidine 143, and histidine 212 together coordinate Zn(2+).

This sequence belongs to the aldolase class II family. RhaD subfamily. In terms of assembly, homotetramer. Zn(2+) serves as cofactor.

It localises to the cytoplasm. The enzyme catalyses L-rhamnulose 1-phosphate = (S)-lactaldehyde + dihydroxyacetone phosphate. The protein operates within carbohydrate degradation; L-rhamnose degradation; glycerone phosphate from L-rhamnose: step 3/3. In terms of biological role, catalyzes the reversible cleavage of L-rhamnulose-1-phosphate to dihydroxyacetone phosphate (DHAP) and L-lactaldehyde. In Salmonella choleraesuis (strain SC-B67), this protein is Rhamnulose-1-phosphate aldolase.